The following is a 339-amino-acid chain: DNA-directed RNA polymerase subunit alpha (339 aa).

The segment at 1–233 is alpha N-terminal domain (alpha-NTD); it reads MVREEVAGST…DLFLPFLHAE (233 aa). The tract at residues 264-339 is alpha C-terminal domain (alpha-CTD); it reads KKGIPLNCIF…IDLLKNKLSF (76 aa).

It belongs to the RNA polymerase alpha chain family. In plastids the minimal PEP RNA polymerase catalytic core is composed of four subunits: alpha, beta, beta', and beta''. When a (nuclear-encoded) sigma factor is associated with the core the holoenzyme is formed, which can initiate transcription.

The protein localises to the plastid. The protein resides in the chloroplast. It catalyses the reaction RNA(n) + a ribonucleoside 5'-triphosphate = RNA(n+1) + diphosphate. In terms of biological role, DNA-dependent RNA polymerase catalyzes the transcription of DNA into RNA using the four ribonucleoside triphosphates as substrates. This is DNA-directed RNA polymerase subunit alpha from Australopyrum velutinum (Mountain wheat-grass).